We begin with the raw amino-acid sequence, 75 residues long: Small ribosomal subunit protein bS18 (75 aa).

Belongs to the bacterial ribosomal protein bS18 family. Part of the 30S ribosomal subunit. Forms a tight heterodimer with protein bS6.

Functionally, binds as a heterodimer with protein bS6 to the central domain of the 16S rRNA, where it helps stabilize the platform of the 30S subunit. The protein is Small ribosomal subunit protein bS18 of Buchnera aphidicola subsp. Schizaphis graminum (strain Sg).